Here is a 369-residue protein sequence, read N- to C-terminus: Muscleblind-like protein 1 (369 aa).

4 consecutive C3H1-type zinc fingers follow at residues 13–41 (WLTL…HPSK), 47–73 (NGRV…HPPP), 178–206 (TDRL…HPAD), and 214–240 (DNTV…HPPA).

The protein belongs to the muscleblind family.

The protein resides in the nucleus. It localises to the cytoplasm. Its subcellular location is the cytoplasmic granule. Functionally, involved in pre-mRNA alternative splicing regulation. Binds to CUG triplet repeat in RNA. This Gallus gallus (Chicken) protein is Muscleblind-like protein 1 (MBNL1).